A 98-amino-acid chain; its full sequence is UPF0235 protein MJ0618 (98 aa).

This sequence belongs to the UPF0235 family.

The chain is UPF0235 protein MJ0618 from Methanocaldococcus jannaschii (strain ATCC 43067 / DSM 2661 / JAL-1 / JCM 10045 / NBRC 100440) (Methanococcus jannaschii).